A 464-amino-acid polypeptide reads, in one-letter code: ATP synthase subunit beta (464 aa).

Residue 153–160 (GGAGVGKT) coordinates ATP.

The protein belongs to the ATPase alpha/beta chains family. As to quaternary structure, F-type ATPases have 2 components, CF(1) - the catalytic core - and CF(0) - the membrane proton channel. CF(1) has five subunits: alpha(3), beta(3), gamma(1), delta(1), epsilon(1). CF(0) has three main subunits: a(1), b(2) and c(9-12). The alpha and beta chains form an alternating ring which encloses part of the gamma chain. CF(1) is attached to CF(0) by a central stalk formed by the gamma and epsilon chains, while a peripheral stalk is formed by the delta and b chains.

The protein resides in the cell membrane. The catalysed reaction is ATP + H2O + 4 H(+)(in) = ADP + phosphate + 5 H(+)(out). Produces ATP from ADP in the presence of a proton gradient across the membrane. The catalytic sites are hosted primarily by the beta subunits. The chain is ATP synthase subunit beta from Alkaliphilus metalliredigens (strain QYMF).